The following is a 116-amino-acid chain: Small ribosomal subunit protein uS13m (116 aa).

Belongs to the universal ribosomal protein uS13 family. Part of the small ribosomal subunit.

The protein localises to the mitochondrion. Its function is as follows. Located at the top of the head of the small subunit, it contacts several helices of the 18S rRNA. The chain is Small ribosomal subunit protein uS13m (RPS13) from Nicotiana tabacum (Common tobacco).